The sequence spans 310 residues: Malate dehydrogenase (310 aa).

NAD(+) is bound by residues 7-12 and aspartate 32; that span reads GAGNVG. 2 residues coordinate substrate: arginine 81 and arginine 87. NAD(+) contacts are provided by residues asparagine 94 and 117–119; that span reads VSN. Substrate contacts are provided by asparagine 119 and arginine 150. Catalysis depends on histidine 174, which acts as the Proton acceptor.

Belongs to the LDH/MDH superfamily. MDH type 3 family.

The catalysed reaction is (S)-malate + NAD(+) = oxaloacetate + NADH + H(+). Catalyzes the reversible oxidation of malate to oxaloacetate. This Chloroherpeton thalassium (strain ATCC 35110 / GB-78) protein is Malate dehydrogenase.